Reading from the N-terminus, the 216-residue chain is Large ribosomal subunit protein eL15 (216 aa).

A compositionally biased stretch (basic residues) spans 170 to 188 (RGLRKSKGFKGTVKHKWSR). The disordered stretch occupies residues 170-201 (RGLRKSKGFKGTVKHKWSRKQKEREEKKRHEA). Over residues 189–201 (KQKEREEKKRHEA) the composition is skewed to basic and acidic residues.

Belongs to the eukaryotic ribosomal protein eL15 family.

In Saccharolobus islandicus (strain M.16.27) (Sulfolobus islandicus), this protein is Large ribosomal subunit protein eL15.